We begin with the raw amino-acid sequence, 376 residues long: UDP-N-acetylglucosamine--N-acetylmuramyl-(pentapeptide) pyrophosphoryl-undecaprenol N-acetylglucosamine transferase (376 aa).

UDP-N-acetyl-alpha-D-glucosamine-binding positions include 11 to 13, Asn117, Arg160, Ser208, and Gln310; that span reads TGG.

The protein belongs to the glycosyltransferase 28 family. MurG subfamily.

It localises to the cell inner membrane. The catalysed reaction is di-trans,octa-cis-undecaprenyl diphospho-N-acetyl-alpha-D-muramoyl-L-alanyl-D-glutamyl-meso-2,6-diaminopimeloyl-D-alanyl-D-alanine + UDP-N-acetyl-alpha-D-glucosamine = di-trans,octa-cis-undecaprenyl diphospho-[N-acetyl-alpha-D-glucosaminyl-(1-&gt;4)]-N-acetyl-alpha-D-muramoyl-L-alanyl-D-glutamyl-meso-2,6-diaminopimeloyl-D-alanyl-D-alanine + UDP + H(+). The protein operates within cell wall biogenesis; peptidoglycan biosynthesis. Its function is as follows. Cell wall formation. Catalyzes the transfer of a GlcNAc subunit on undecaprenyl-pyrophosphoryl-MurNAc-pentapeptide (lipid intermediate I) to form undecaprenyl-pyrophosphoryl-MurNAc-(pentapeptide)GlcNAc (lipid intermediate II). The protein is UDP-N-acetylglucosamine--N-acetylmuramyl-(pentapeptide) pyrophosphoryl-undecaprenol N-acetylglucosamine transferase of Rickettsia africae (strain ESF-5).